Reading from the N-terminus, the 198-residue chain is Holliday junction resolvase RecU (198 aa).

A disordered region spans residues 1-22; it reads MVNYPHKVSSQKRQTSLSQPKN. The segment covering 11 to 22 has biased composition (polar residues); that stretch reads QKRQTSLSQPKN. Mg(2+) contacts are provided by threonine 81, aspartate 83, glutamate 96, and glutamine 115.

This sequence belongs to the RecU family. Mg(2+) is required as a cofactor.

It is found in the cytoplasm. It catalyses the reaction Endonucleolytic cleavage at a junction such as a reciprocal single-stranded crossover between two homologous DNA duplexes (Holliday junction).. Functionally, endonuclease that resolves Holliday junction intermediates in genetic recombination. Cleaves mobile four-strand junctions by introducing symmetrical nicks in paired strands. Promotes annealing of linear ssDNA with homologous dsDNA. Required for DNA repair, homologous recombination and chromosome segregation. In Streptococcus pneumoniae (strain P1031), this protein is Holliday junction resolvase RecU.